A 116-amino-acid polypeptide reads, in one-letter code: Ribosome-binding factor A (116 aa).

The protein belongs to the RbfA family. Monomer. Binds 30S ribosomal subunits, but not 50S ribosomal subunits or 70S ribosomes.

Its subcellular location is the cytoplasm. In terms of biological role, one of several proteins that assist in the late maturation steps of the functional core of the 30S ribosomal subunit. Associates with free 30S ribosomal subunits (but not with 30S subunits that are part of 70S ribosomes or polysomes). Required for efficient processing of 16S rRNA. May interact with the 5'-terminal helix region of 16S rRNA. The polypeptide is Ribosome-binding factor A (Streptococcus pyogenes serotype M5 (strain Manfredo)).